Here is a 119-residue protein sequence, read N- to C-terminus: Large ribosomal subunit protein bL20 (119 aa).

It belongs to the bacterial ribosomal protein bL20 family.

Its function is as follows. Binds directly to 23S ribosomal RNA and is necessary for the in vitro assembly process of the 50S ribosomal subunit. It is not involved in the protein synthesizing functions of that subunit. In Rhodopseudomonas palustris (strain BisB18), this protein is Large ribosomal subunit protein bL20.